We begin with the raw amino-acid sequence, 430 residues long: Bifunctional protein GlmU (430 aa).

A pyrophosphorylase region spans residues 1-223 (MSFSVVILAA…KNEFQGVNSK (223 aa)). UDP-N-acetyl-alpha-D-glucosamine-binding positions include 8–11 (LAAG), Lys22, and 81–82 (GT). Residue Asp102 participates in Mg(2+) binding. Residues Gly135, Glu149, Asn164, and Asn221 each coordinate UDP-N-acetyl-alpha-D-glucosamine. Asn221 contacts Mg(2+). A linker region spans residues 224–244 (YDLANAEIVMQDRIKRHWMQQ). Residues 245–430 (GVIMRLPQTI…DFYYKFFGKN (186 aa)) form an N-acetyltransferase region. UDP-N-acetyl-alpha-D-glucosamine contacts are provided by Arg308 and Lys325. The Proton acceptor role is filled by His336. Positions 339 and 350 each coordinate UDP-N-acetyl-alpha-D-glucosamine. Acetyl-CoA-binding positions include Ala353, 359 to 360 (NY), Ser378, Ala396, and Arg413.

This sequence in the N-terminal section; belongs to the N-acetylglucosamine-1-phosphate uridyltransferase family. The protein in the C-terminal section; belongs to the transferase hexapeptide repeat family. As to quaternary structure, homotrimer. Mg(2+) is required as a cofactor.

The protein resides in the cytoplasm. It carries out the reaction alpha-D-glucosamine 1-phosphate + acetyl-CoA = N-acetyl-alpha-D-glucosamine 1-phosphate + CoA + H(+). The catalysed reaction is N-acetyl-alpha-D-glucosamine 1-phosphate + UTP + H(+) = UDP-N-acetyl-alpha-D-glucosamine + diphosphate. It participates in nucleotide-sugar biosynthesis; UDP-N-acetyl-alpha-D-glucosamine biosynthesis; N-acetyl-alpha-D-glucosamine 1-phosphate from alpha-D-glucosamine 6-phosphate (route II): step 2/2. The protein operates within nucleotide-sugar biosynthesis; UDP-N-acetyl-alpha-D-glucosamine biosynthesis; UDP-N-acetyl-alpha-D-glucosamine from N-acetyl-alpha-D-glucosamine 1-phosphate: step 1/1. Its pathway is bacterial outer membrane biogenesis; LPS lipid A biosynthesis. Its function is as follows. Catalyzes the last two sequential reactions in the de novo biosynthetic pathway for UDP-N-acetylglucosamine (UDP-GlcNAc). The C-terminal domain catalyzes the transfer of acetyl group from acetyl coenzyme A to glucosamine-1-phosphate (GlcN-1-P) to produce N-acetylglucosamine-1-phosphate (GlcNAc-1-P), which is converted into UDP-GlcNAc by the transfer of uridine 5-monophosphate (from uridine 5-triphosphate), a reaction catalyzed by the N-terminal domain. The chain is Bifunctional protein GlmU from Nitratiruptor sp. (strain SB155-2).